Reading from the N-terminus, the 234-residue chain is Large ribosomal subunit protein uL1 (234 aa).

This sequence belongs to the universal ribosomal protein uL1 family. In terms of assembly, part of the 50S ribosomal subunit.

Functionally, binds directly to 23S rRNA. The L1 stalk is quite mobile in the ribosome, and is involved in E site tRNA release. In terms of biological role, protein L1 is also a translational repressor protein, it controls the translation of the L11 operon by binding to its mRNA. This Aliivibrio fischeri (strain ATCC 700601 / ES114) (Vibrio fischeri) protein is Large ribosomal subunit protein uL1.